We begin with the raw amino-acid sequence, 277 residues long: Diaminopimelate epimerase (277 aa).

Residues N13, Q46, and N66 each contribute to the substrate site. The Proton donor role is filled by C75. Substrate is bound by residues 76–77 (GN), N160, N193, and 211–212 (ER). The active-site Proton acceptor is C220. 221–222 (GS) is a substrate binding site.

Belongs to the diaminopimelate epimerase family. In terms of assembly, homodimer.

Its subcellular location is the cytoplasm. The enzyme catalyses (2S,6S)-2,6-diaminopimelate = meso-2,6-diaminopimelate. Its pathway is amino-acid biosynthesis; L-lysine biosynthesis via DAP pathway; DL-2,6-diaminopimelate from LL-2,6-diaminopimelate: step 1/1. Its function is as follows. Catalyzes the stereoinversion of LL-2,6-diaminopimelate (L,L-DAP) to meso-diaminopimelate (meso-DAP), a precursor of L-lysine and an essential component of the bacterial peptidoglycan. In Legionella pneumophila subsp. pneumophila (strain Philadelphia 1 / ATCC 33152 / DSM 7513), this protein is Diaminopimelate epimerase.